Reading from the N-terminus, the 377-residue chain is Mitogen-activated protein kinase mpkC (377 aa).

The Protein kinase domain occupies 20–299 (YVNPQPIGMG…AQDALRHPYL (280 aa)). ATP-binding positions include 26–34 (IGMGSFGLV) and K49. The Proton acceptor role is filled by D141. T171 is modified (phosphothreonine). The TXY signature appears at 171–173 (TGY). Y173 is modified (phosphotyrosine).

Belongs to the protein kinase superfamily. Ser/Thr protein kinase family. MAP kinase subfamily. HOG1 sub-subfamily. It depends on Mg(2+) as a cofactor. In terms of processing, dually phosphorylated on Thr-171 and Tyr-173, which activates the enzyme.

The catalysed reaction is L-seryl-[protein] + ATP = O-phospho-L-seryl-[protein] + ADP + H(+). The enzyme catalyses L-threonyl-[protein] + ATP = O-phospho-L-threonyl-[protein] + ADP + H(+). Its activity is regulated as follows. Activated by tyrosine and threonine phosphorylation. Its function is as follows. Mitogen-activated protein kinase required for growth on media where sorbitol or mannitol is the sole carbon source. In Neosartorya fischeri (strain ATCC 1020 / DSM 3700 / CBS 544.65 / FGSC A1164 / JCM 1740 / NRRL 181 / WB 181) (Aspergillus fischerianus), this protein is Mitogen-activated protein kinase mpkC (mpkc).